Here is a 194-residue protein sequence, read N- to C-terminus: Small COPII coat GTPase SAR1B (194 aa).

The short motif at 2-4 (FLV) is the STAR; SAR1-N-terminal activation recruitment. Required for the activation and subsequent recruitment to ER membrane element. The interval 10–14 (MFLWL) is mediates recruitment to ER membranes. Asparagine 30, alanine 31, glycine 32, lysine 33, threonine 34, and threonine 35 together coordinate GDP. Asparagine 30 lines the GTP pocket. Residues glycine 32, lysine 33, threonine 34, and threonine 35 each coordinate GTP. Aspartate 70 lines the Mg(2+) pocket. The GDP site is built by lysine 131, aspartate 133, and isoleucine 172. Lysine 131, aspartate 133, and isoleucine 172 together coordinate GTP.

This sequence belongs to the small GTPase superfamily. SAR1 family. Homodimer; upon association with membrane. Part of the coat protein complex II/COPII, composed of SEC23/24 and SEC13/31 heterodimers, that it helps recruit and assemble on endoplasmic reticulum (ER) membranes at ER exit sites.

It localises to the endoplasmic reticulum membrane. The protein localises to the golgi apparatus. The protein resides in the golgi stack membrane. It is found in the cytoplasm. Its subcellular location is the cytosol. It carries out the reaction GTP + H2O = GDP + phosphate + H(+). Its activity is regulated as follows. Small GTPases activation is mediated by guanine exchange factors (GEF), while inactivation through hydrolysis of the bound GTP is stimulated by GTPase activating proteins (GAP). Small GTPase that cycles between an active GTP-bound and an inactive GDP-bound state and mainly functions in vesicle-mediated endoplasmic reticulum (ER) to Golgi transport. The active GTP-bound form inserts into the endoplasmic reticulum membrane where it recruits the remainder of the coat protein complex II/COPII. The coat protein complex II assembling and polymerizing on endoplasmic reticulum membrane is responsible for both the sorting of cargos and the deformation and budding of membranes into vesicles destined to the Golgi. The protein is Small COPII coat GTPase SAR1B (sarB) of Dictyostelium discoideum (Social amoeba).